The sequence spans 577 residues: 2-hydroxyacyl-CoA lyase (577 aa).

Glu59 contacts thiamine diphosphate. The thiamine pyrophosphate binding stretch occupies residues Thr412–Tyr493. Mg(2+) is bound by residues Asp462 and Asn489.

This sequence belongs to the TPP enzyme family. As to quaternary structure, homotetramer. It depends on Mg(2+) as a cofactor. Thiamine diphosphate serves as cofactor.

The enzyme catalyses an (R)-2-hydroxy-long-chain-fatty acyl-CoA = a long-chain fatty aldehyde + formyl-CoA. The catalysed reaction is a 2-hydroxy-3-methyl fatty acyl-CoA = a 2-methyl-branched fatty aldehyde + formyl-CoA. Functionally, catalyzes a carbon-carbon cleavage reaction; cleaves a 2-hydroxy-3-methylacyl-CoA into formyl-CoA and a 2-methyl-branched fatty aldehyde. This is 2-hydroxyacyl-CoA lyase from Oryza sativa subsp. japonica (Rice).